Consider the following 123-residue polypeptide: Small ribosomal subunit protein uS12 (123 aa).

The tract at residues 1–24 is disordered; it reads MPTINQLIRKERKKQVKKSKSPAL. Residues 10 to 20 show a composition bias toward basic residues; the sequence is KERKKQVKKSK. D89 carries the 3-methylthioaspartic acid modification.

This sequence belongs to the universal ribosomal protein uS12 family. Part of the 30S ribosomal subunit. Contacts proteins S8 and S17. May interact with IF1 in the 30S initiation complex.

With S4 and S5 plays an important role in translational accuracy. Functionally, interacts with and stabilizes bases of the 16S rRNA that are involved in tRNA selection in the A site and with the mRNA backbone. Located at the interface of the 30S and 50S subunits, it traverses the body of the 30S subunit contacting proteins on the other side and probably holding the rRNA structure together. The combined cluster of proteins S8, S12 and S17 appears to hold together the shoulder and platform of the 30S subunit. In Sulfurovum sp. (strain NBC37-1), this protein is Small ribosomal subunit protein uS12.